The primary structure comprises 595 residues: Zinc finger protein 467 (595 aa).

A disordered region spans residues Met1–Glu67. Residue Lys97 forms a Glycyl lysine isopeptide (Lys-Gly) (interchain with G-Cter in SUMO2) linkage. 6 C2H2-type zinc fingers span residues Tyr160–His182, Cys188–His210, Phe216–His238, Tyr244–His266, Phe272–His294, and Tyr300–His322. Residues Gln313–Pro350 are disordered. Residues Ala325–Pro343 show a composition bias toward low complexity. 6 C2H2-type zinc fingers span residues Phe355–His377, Phe431–His453, Phe459–His481, Phe487–His509, His515–His537, and Phe543–His565. Lys368 participates in a covalent cross-link: Glycyl lysine isopeptide (Lys-Gly) (interchain with G-Cter in SUMO2).

It belongs to the krueppel C2H2-type zinc-finger protein family. As to quaternary structure, interacts with STAT3. Enhances STAT3 activity by keeping it in the nucleus.

Its subcellular location is the nucleus. Its function is as follows. Transcription factor that promotes adipocyte differentiation and suppresses osteoblast differentiation in the bone marrow. Enhances the osteoclast-supporting ability of stromal cells. Binds with STAT3 the consensus sequence 5'-CTTCTGGGAAGA-3' of the acute phase response element (APRE). Transactivates several promoters including FOS, OSM and PPARG. Recruits a histone deacetylase complex. This chain is Zinc finger protein 467 (ZNF467), found in Homo sapiens (Human).